The chain runs to 484 residues: tRNA sulfurtransferase (484 aa).

Positions 63-167 (QAFGERLACI…RDNLYMVTKR (105 aa)) constitute a THUMP domain. ATP is bound by residues 185–186 (LI), Lys-267, Gly-289, and Gln-298. Residues Cys-346 and Cys-458 are joined by a disulfide bond. Positions 406-484 (IDTNQVVIDI…GYTNVKVYRP (79 aa)) constitute a Rhodanese domain. The active-site Cysteine persulfide intermediate is the Cys-458.

Belongs to the ThiI family.

Its subcellular location is the cytoplasm. The catalysed reaction is [ThiI sulfur-carrier protein]-S-sulfanyl-L-cysteine + a uridine in tRNA + 2 reduced [2Fe-2S]-[ferredoxin] + ATP + H(+) = [ThiI sulfur-carrier protein]-L-cysteine + a 4-thiouridine in tRNA + 2 oxidized [2Fe-2S]-[ferredoxin] + AMP + diphosphate. The enzyme catalyses [ThiS sulfur-carrier protein]-C-terminal Gly-Gly-AMP + S-sulfanyl-L-cysteinyl-[cysteine desulfurase] + AH2 = [ThiS sulfur-carrier protein]-C-terminal-Gly-aminoethanethioate + L-cysteinyl-[cysteine desulfurase] + A + AMP + 2 H(+). Its pathway is cofactor biosynthesis; thiamine diphosphate biosynthesis. Its function is as follows. Catalyzes the ATP-dependent transfer of a sulfur to tRNA to produce 4-thiouridine in position 8 of tRNAs, which functions as a near-UV photosensor. Also catalyzes the transfer of sulfur to the sulfur carrier protein ThiS, forming ThiS-thiocarboxylate. This is a step in the synthesis of thiazole, in the thiamine biosynthesis pathway. The sulfur is donated as persulfide by IscS. This is tRNA sulfurtransferase from Shewanella baltica (strain OS155 / ATCC BAA-1091).